The following is a 212-amino-acid chain: Pyrrolidone-carboxylate peptidase (212 aa).

Active-site residues include Glu-80, Cys-143, and His-165.

This sequence belongs to the peptidase C15 family. Homotetramer.

It is found in the cytoplasm. The catalysed reaction is Release of an N-terminal pyroglutamyl group from a polypeptide, the second amino acid generally not being Pro.. Removes 5-oxoproline from various penultimate amino acid residues except L-proline. The sequence is that of Pyrrolidone-carboxylate peptidase from Aliivibrio fischeri (strain MJ11) (Vibrio fischeri).